Consider the following 1231-residue polypeptide: Chromosome-associated kinesin KIF4 (1231 aa).

The region spanning 9-337 (PVRVALRCRP…LRYADRARKI (329 aa)) is the Kinesin motor domain. An ATP-binding site is contributed by 88–95 (GQTGSGKT). Residues 351–1000 (ELNHLKQQVQ…IKQKLTLLQV (650 aa)) adopt a coiled-coil conformation. Ser395 is modified (phosphoserine). Position 800 is a phosphothreonine (Thr800). Residues Ser802, Ser811, and Ser816 each carry the phosphoserine modification. The globular stretch occupies residues 1001–1231 (ASKQKPHLTR…GCSPIQEESH (231 aa)). The interval 1189–1212 (HPELKSIASESQENKAIGKKKKRA) is disordered. Phosphoserine occurs at positions 1224 and 1230.

The protein belongs to the TRAFAC class myosin-kinesin ATPase superfamily. Kinesin family. Chromokinesin subfamily. The cofactor is [2Fe-2S] cluster. It depends on [4Fe-4S] cluster as a cofactor. In terms of tissue distribution, expressed in pyramidal cells in juvenile hippocampus, granular cells in juvenile cerebellar cortex and in adult spleen.

The protein resides in the nucleus. It is found in the chromosome. The protein localises to the cytoplasm. Its subcellular location is the cytoskeleton. Its function is as follows. Iron-sulfur (Fe-S) cluster binding motor protein that has a role in chromosome segregation during mitosis. Required for mitotic chromosomal positioning and bipolar spindle stabilization. The chain is Chromosome-associated kinesin KIF4 (Kif4) from Mus musculus (Mouse).